Consider the following 463-residue polypeptide: Glycerol-3-phosphate acyltransferase, chloroplastic (463 aa).

A chloroplast-targeting transit peptide spans 1–91 (MSIFFSPSSP…AATQPSAGSD (91 aa)). Disordered regions lie at residues 18-37 (NANP…TPPL) and 65-95 (AETV…HGHS). Composition is skewed to low complexity over residues 24-37 (SPSS…TPPL) and 74-90 (PSPS…SAGS). The HXXXXD motif motif lies at 229-234 (HQTEAD).

It belongs to the GPAT/DAPAT family.

The protein resides in the plastid. It is found in the chloroplast stroma. The catalysed reaction is sn-glycerol 3-phosphate + an acyl-CoA = a 1-acyl-sn-glycero-3-phosphate + CoA. Its pathway is phospholipid metabolism; CDP-diacylglycerol biosynthesis; CDP-diacylglycerol from sn-glycerol 3-phosphate: step 1/3. Its function is as follows. Esterifies acyl-group from acyl-ACP to the sn-1 position of glycerol-3-phosphate. The enzyme from chilling-resistant plants discriminates against non-fluid palmitic acid and selects oleic acid whereas the enzyme from sensitive plants accepts both fatty acids. The sequence is that of Glycerol-3-phosphate acyltransferase, chloroplastic from Carthamus tinctorius (Safflower).